Consider the following 810-residue polypeptide: Glycerol-3-phosphate acyltransferase (810 aa).

Residues 305-310 (CHRSHI) carry the HXXXXD motif motif.

It belongs to the GPAT/DAPAT family.

It is found in the cell inner membrane. It carries out the reaction sn-glycerol 3-phosphate + an acyl-CoA = a 1-acyl-sn-glycero-3-phosphate + CoA. The protein operates within phospholipid metabolism; CDP-diacylglycerol biosynthesis; CDP-diacylglycerol from sn-glycerol 3-phosphate: step 1/3. This chain is Glycerol-3-phosphate acyltransferase, found in Haemophilus influenzae (strain 86-028NP).